Consider the following 408-residue polypeptide: MIEVLLVTICLAVFPYQGSSIILESGNVNDYEVVYPRKVTELPKGAVQPKYEDAMQYEFKVNGEPVVLHLEKNKGLFSEDYSETHYSPDGRKIITYPSFEDHCYYHGRIENDADSTASISACNGLKGHFKLQGETYLIEPLKLSDSEAHAVYKYENVEKEDEAPKMCGVTETNWESYEPIKKASQSNLTPEQQRFSPRYIELAVVADHGIFTKYNSNLNTIRTRVHEMLNTVNGFYRSVDVHAPLANLEVWSKQDLIKVQKDSSKTLKSFGEWRERDLLPRISHDHAQLLTAVVFDGNTIGRAYTGGMCDPRHSVGVVRDHSKNNLWVAVTMAHELGHNLGIHHDTGSCSCGAKSCIMASVLSKVLSYEFSDCSQNQYETYLTNHNPQCILNKPLLTVSGNELLEAGE.

A signal peptide spans 1-20; it reads MIEVLLVTICLAVFPYQGSS. The propeptide occupies 21–191; sequence IILESGNVND…KASQSNLTPE (171 aa). Residue glutamine 192 is modified to Pyrrolidone carboxylic acid. A Peptidase M12B domain is found at 198–394; that stretch reads RYIELAVVAD…HNPQCILNKP (197 aa). 3 disulfide bridges follow: cysteine 309–cysteine 389, cysteine 349–cysteine 373, and cysteine 351–cysteine 356. Histidine 334 provides a ligand contact to Zn(2+). Glutamate 335 is an active-site residue. Residues histidine 338 and histidine 344 each coordinate Zn(2+). A propeptide spanning residues 395-408 is cleaved from the precursor; the sequence is LLTVSGNELLEAGE.

This sequence belongs to the venom metalloproteinase (M12B) family. P-I subfamily. In terms of assembly, monomer. Zn(2+) serves as cofactor. As to expression, expressed by the venom gland.

It localises to the secreted. Inhibited by EDTA, partially inhibited by o-phenantropine, and not inhibited by PMSF, pepstatin A, and aprotinin. In terms of biological role, zinc metalloprotease that exhibits a weak hemorrhagic activity (with a minimum hemorrhagic dose of 20 ug by intradermal and intramuscular injection into mice). The basal membrane components collagen (all chains of type IV) (COL4A4), laminin and nidogen are all degraded by this toxin. Rapidly degrades the Aalpha-chain (FGA) of fibrinogen, and later on, degrades the Bbeta-chain (FGB) of fibrinogen. Also activates the complement system, and induces rat neutrophil chemotaxis. Induces edema in mouse food pad and shows a mild myotoxicity. In Bothrops asper (Terciopelo), this protein is Snake venom metalloproteinase BaP1.